The following is a 324-amino-acid chain: Myb-like DNA-binding protein myb-1 (324 aa).

HTH myb-type domains are found at residues Met4–Leu59 and Asn60–Lys110. Residues Asn107–Thr231 form a disordered region. A compositionally biased stretch (polar residues) spans Arg155–Asp165. Positions Ser166–Ile175 are enriched in basic and acidic residues. Low complexity-rich tracts occupy residues Gln183–Gln192 and Pro222–Thr231.

The protein resides in the nucleus. The protein is Myb-like DNA-binding protein myb-1 (rca-1) of Neurospora crassa (strain ATCC 24698 / 74-OR23-1A / CBS 708.71 / DSM 1257 / FGSC 987).